A 234-amino-acid polypeptide reads, in one-letter code: R-spondin-4 (234 aa).

The N-terminal stretch at 1-19 is a signal peptide; it reads MRAPLCLLLLVAHAVDMLA. An N-linked (GlcNAc...) asparagine glycan is attached at N34. 11 cysteine pairs are disulfide-bonded: C35–C41, C38–C47, C50–C69, C73–C88, C91–C98, C95–C104, C107–C118, C122–C135, C139–C181, C150–C157, and C190–C196. Residues 85–128 form an FU repeat; that stretch reads VNRCKKCGATCESCFSQDFCIRCKRQFYLYKGKCLPTCPPGTLA. In terms of domain architecture, TSP type-1 spans 138-197; that stretch reads ECELGPWGGWSPCTHNGKTCGSAWGLESRVREAGRAGHEEAATCQVLSESRKCPIQRPCP. Residues 190-234 form a disordered region; it reads CPIQRPCPGERSPGQKKGRKDRRPRKDRKLDRRLDVRPRQPGLQP. Residues 203–216 are compositionally biased toward basic residues; that stretch reads GQKKGRKDRRPRKD. Residues 217–227 show a composition bias toward basic and acidic residues; it reads RKLDRRLDVRP.

It belongs to the R-spondin family. Binds heparin. Interacts with LGR4, LGR5 and LGR6. In terms of processing, tyr-112 may be phosphorylated; however as this position is probably extracellular, the vivo relevance is not proven.

It localises to the secreted. Functionally, activator of the canonical Wnt signaling pathway by acting as a ligand for LGR4-6 receptors. Upon binding to LGR4-6 (LGR4, LGR5 or LGR6), LGR4-6 associate with phosphorylated LRP6 and frizzled receptors that are activated by extracellular Wnt receptors, triggering the canonical Wnt signaling pathway to increase expression of target genes. Also regulates the canonical Wnt/beta-catenin-dependent pathway and non-canonical Wnt signaling by acting as an inhibitor of ZNRF3, an important regulator of the Wnt signaling pathway. The protein is R-spondin-4 (RSPO4) of Homo sapiens (Human).